The sequence spans 21 residues: Phenol-soluble modulin alpha 2 peptide (21 aa).

It belongs to the phenol-soluble modulin alpha peptides family.

Functionally, peptide which can recruit, activate and subsequently lyse human neutrophils, thus eliminating the main cellular defense against infection. The polypeptide is Phenol-soluble modulin alpha 2 peptide (psmA2) (Staphylococcus aureus (strain USA300 / TCH1516)).